A 91-amino-acid polypeptide reads, in one-letter code: N(2)-fixation sustaining protein CowN (91 aa).

Belongs to the CowN family.

In terms of biological role, is required to sustain N(2)-dependent growth in the presence of low levels of carbon monoxide (CO). Probably acts by protecting the N(2) fixation ability of the nitrogenase complex, which is inactivated in the presence of CO. In Gluconacetobacter diazotrophicus (strain ATCC 49037 / DSM 5601 / CCUG 37298 / CIP 103539 / LMG 7603 / PAl5), this protein is N(2)-fixation sustaining protein CowN.